Reading from the N-terminus, the 68-residue chain is MNKIYFVIVFVACFCLFAEAQLTFTSSWGGGKRSGVAPMSCKNEEAVATIFKLIQNEAERFIICQQKS.

Residues 1–20 form the signal peptide; sequence MNKIYFVIVFVACFCLFAEA. A Pyrrolidone carboxylic acid modification is found at glutamine 21. Glycine 30 carries the post-translational modification Glycine amide. A propeptide spanning residues 34–68 is cleaved from the precursor; it reads SGVAPMSCKNEEAVATIFKLIQNEAERFIICQQKS.

Expressed in antennal lobe (AL), corpora cardiaca (CC), corpora allata (CA) and gnathal ganglion (GNG) (at protein level). Expression in CC and CA detected in all animals, expression in GNG in some animals and in AL in few animals (at protein level).

It is found in the secreted. Functionally, this hormone, released from cells in the corpora cardiaca, causes release of diglycerides from the fat body and stimulation of muscles to use these diglycerides as an energy source during energy-demanding processes. This Agrotis ipsilon (Black cutworm moth) protein is Adipokinetic prohormone type 1.